We begin with the raw amino-acid sequence, 95 residues long: Oxytetracycline polyketide synthase acyl carrier protein (95 aa).

One can recognise a Carrier domain in the interval 3-81; it reads LLTLSDLLTL…ALIEMTNASL (79 aa). At serine 41 the chain carries O-(pantetheine 4'-phosphoryl)serine.

Post-translationally, 4'-phosphopantetheine is transferred from CoA to a specific serine of the apo-ACP-like protein.

The protein operates within antibiotic biosynthesis; oxytetracycline biosynthesis. Its function is as follows. Acyl carrier protein. The polypeptide is Oxytetracycline polyketide synthase acyl carrier protein (Streptomyces rimosus).